The sequence spans 233 residues: Transcriptional regulatory protein WalR (233 aa).

Residues 4 to 117 form the Response regulatory domain; sequence KVVVVDDEKP…ELIARVKANL (114 aa). 4-aspartylphosphate is present on Asp53. Positions 132 to 231 form a DNA-binding region, ompR/PhoB-type; that stretch reads TNEITIKDIV…RRGVGYFLQQ (100 aa).

In terms of processing, phosphorylated by WalK.

The protein resides in the cytoplasm. In terms of biological role, member of the two-component regulatory system WalK/WalR. This Staphylococcus haemolyticus (strain JCSC1435) protein is Transcriptional regulatory protein WalR (walR).